The primary structure comprises 161 residues: Putative ecotin-like protein (161 aa).

The N-terminal stretch at 1–24 (MSLRPIETAIASLTMLMLQGCAHA) is a signal peptide.

It belongs to the protease inhibitor I11 (ecotin) family.

The polypeptide is Putative ecotin-like protein (Methylobacillus flagellatus (strain ATCC 51484 / DSM 6875 / VKM B-1610 / KT)).